We begin with the raw amino-acid sequence, 875 residues long: Receptor-like protein 33 (875 aa).

A signal peptide spans 1-23; it reads MSLIPITFYFLFLFFSNFRGVFA. The Extracellular portion of the chain corresponds to 24-822; the sequence is VPNIHLCHFE…GESETLESEQ (799 aa). 5 N-linked (GlcNAc...) asparagine glycosylation sites follow: N65, N103, N133, N146, and N181. LRR repeat units lie at residues 110–133, 134–157, 159–182, 183–205, 206–230, 231–254, 256–278, 280–302, 303–327, and 329–351; these read FHFL…SIGN, LSHL…SLGN, FHLT…LGNL, SYLT…SFGS, LNQL…VINL, TKLS…ITSL, ILES…LFTI, SITL…NISS, PSNL…ISRL, and NLRT…IFSH. N-linked (GlcNAc...) asparagine glycosylation is found at N229 and N250. Residue N299 is glycosylated (N-linked (GlcNAc...) asparagine). One copy of the LRR 11; degenerate repeat lies at 352–377; that stretch reads LKLLGNLYLSHSNTTTTIDLNAVLSC. N-linked (GlcNAc...) asparagine glycans are attached at residues N364, N395, and N411. LRR repeat units follow at residues 378-401, 404-427, 428-451, 455-477, 479-502, 503-528, 530-549, 550-573, 575-596, 597-619, 620-643, 686-710, 711-734, 735-758, and 760-783; these read FKML…SVSD, LGLI…LRTQ, RQMR…LLLQ, MHIS…TVVP, PSMK…ICSL, RSLI…KFKS, LSDL…KTII, KSLR…LIHF, TLEV…WLSS, LKKL…KTRF, PKLR…CFVE, LKIY…IGLL, KELH…MGNL, RELE…LGNL, and YLAY…QFRT. N-linked (GlcNAc...) asparagine glycans are attached at residues N490 and N514. N-linked (GlcNAc...) asparagine glycosylation occurs at N587. N633 carries N-linked (GlcNAc...) asparagine glycosylation. 3 N-linked (GlcNAc...) asparagine glycosylation sites follow: N717, N757, and N765. The chain crosses the membrane as a helical span at residues 823 to 843; sequence VLSWIAAAIGFTPGIVLGLTI. Residues 844–875 lie on the Cytoplasmic side of the membrane; it reads GHIVLSSKPRWFFKVLYINNSRRRRRTRSEKS.

It belongs to the RLP family.

It localises to the cell membrane. The sequence is that of Receptor-like protein 33 from Arabidopsis thaliana (Mouse-ear cress).